The chain runs to 222 residues: Oligoribonuclease (222 aa).

The tract at residues 19–38 is disordered; it reads PMASSSSTGKQEESVNGSLE. Over residues 21–35 the composition is skewed to polar residues; sequence ASSSSTGKQEESVNG. In terms of domain architecture, Exonuclease spans 46 to 210; it reads LVWIDLEMTG…DDIRESIKEL (165 aa). Residue His-167 is part of the active site.

Belongs to the oligoribonuclease family.

In terms of biological role, 3'-to-5' exoribonuclease specific for small oligoribonucleotides. The protein is Oligoribonuclease of Arabidopsis thaliana (Mouse-ear cress).